Consider the following 173-residue polypeptide: Shikimate kinase (173 aa).

11 to 16 (GTGKTS) serves as a coordination point for ATP. Residue threonine 15 participates in Mg(2+) binding. The substrate site is built by aspartate 33, arginine 57, and glycine 79. Residue arginine 117 coordinates ATP. Arginine 136 is a substrate binding site.

This sequence belongs to the shikimate kinase family. In terms of assembly, monomer. Requires Mg(2+) as cofactor.

It localises to the cytoplasm. The enzyme catalyses shikimate + ATP = 3-phosphoshikimate + ADP + H(+). The protein operates within metabolic intermediate biosynthesis; chorismate biosynthesis; chorismate from D-erythrose 4-phosphate and phosphoenolpyruvate: step 5/7. In terms of biological role, catalyzes the specific phosphorylation of the 3-hydroxyl group of shikimic acid using ATP as a cosubstrate. The protein is Shikimate kinase of Thermodesulfovibrio yellowstonii (strain ATCC 51303 / DSM 11347 / YP87).